Here is a 119-residue protein sequence, read N- to C-terminus: Flagellar transcriptional regulator FlhD (119 aa).

The protein belongs to the FlhD family. In terms of assembly, homodimer; disulfide-linked. Forms a heterohexamer composed of two FlhC and four FlhD subunits. Each FlhC binds a FlhD dimer, forming a heterotrimer, and a hexamer assembles by dimerization of two heterotrimers.

The protein localises to the cytoplasm. Functionally, functions in complex with FlhC as a master transcriptional regulator that regulates transcription of several flagellar and non-flagellar operons by binding to their promoter region. Activates expression of class 2 flagellar genes, including fliA, which is a flagellum-specific sigma factor that turns on the class 3 genes. Also regulates genes whose products function in a variety of physiological pathways. This Shigella boydii serotype 4 (strain Sb227) protein is Flagellar transcriptional regulator FlhD.